The chain runs to 389 residues: Succinate--CoA ligase [ADP-forming] subunit beta (389 aa).

An ATP-grasp domain is found at 9–244; that stretch reads KQLFADYGLP…PSQEDERERR (236 aa). Residues lysine 46, 53 to 55, glutamate 99, threonine 102, and glutamate 107 each bind ATP; that span reads GRG. Mg(2+) contacts are provided by asparagine 199 and aspartate 213. Substrate-binding positions include asparagine 264 and 321–323; that span reads GIV.

The protein belongs to the succinate/malate CoA ligase beta subunit family. In terms of assembly, heterotetramer of two alpha and two beta subunits. It depends on Mg(2+) as a cofactor.

The catalysed reaction is succinate + ATP + CoA = succinyl-CoA + ADP + phosphate. The enzyme catalyses GTP + succinate + CoA = succinyl-CoA + GDP + phosphate. The protein operates within carbohydrate metabolism; tricarboxylic acid cycle; succinate from succinyl-CoA (ligase route): step 1/1. In terms of biological role, succinyl-CoA synthetase functions in the citric acid cycle (TCA), coupling the hydrolysis of succinyl-CoA to the synthesis of either ATP or GTP and thus represents the only step of substrate-level phosphorylation in the TCA. The beta subunit provides nucleotide specificity of the enzyme and binds the substrate succinate, while the binding sites for coenzyme A and phosphate are found in the alpha subunit. In Alcanivorax borkumensis (strain ATCC 700651 / DSM 11573 / NCIMB 13689 / SK2), this protein is Succinate--CoA ligase [ADP-forming] subunit beta.